We begin with the raw amino-acid sequence, 181 residues long: Der GTPase-activating protein YihI (181 aa).

Disordered regions lie at residues Met1–Pro75 and Glu145–Gly181. Positions Arg32–Leu43 are enriched in basic residues. Residues Pro146–Glu155 show a composition bias toward acidic residues. The segment covering Ala156–Asp165 has biased composition (basic and acidic residues). Positions Asp166–Gly181 are enriched in acidic residues.

The protein belongs to the YihI family. Interacts with Der.

A GTPase-activating protein (GAP) that modifies Der/EngA GTPase function. May play a role in ribosome biogenesis. In Vibrio vulnificus (strain CMCP6), this protein is Der GTPase-activating protein YihI.